A 130-amino-acid chain; its full sequence is Small ribosomal subunit protein eS6 (130 aa).

It belongs to the eukaryotic ribosomal protein eS6 family.

The sequence is that of Small ribosomal subunit protein eS6 from Methanosphaera stadtmanae (strain ATCC 43021 / DSM 3091 / JCM 11832 / MCB-3).